Consider the following 766-residue polypeptide: Polyribonucleotide nucleotidyltransferase (766 aa).

2 residues coordinate Mg(2+): Asp490 and Asp496. In terms of domain architecture, KH spans 557 to 616 (PKIDTITIPVDKIKVVIGKGGEQIDKIIAETGVKIDIDDEGLCSIFSSDQSAIDRAKEII). In terms of domain architecture, S1 motif spans 626–694 (GEVYEAKVVR…DKGRVDASMR (69 aa)). 2 stretches are compositionally biased toward basic and acidic residues: residues 700–734 (PEGY…DRNN) and 744–766 (FELR…KKPE). A disordered region spans residues 700-766 (PEGYVEPERK…FPELSTKKPE (67 aa)).

It belongs to the polyribonucleotide nucleotidyltransferase family. Mg(2+) is required as a cofactor.

It localises to the cytoplasm. It catalyses the reaction RNA(n+1) + phosphate = RNA(n) + a ribonucleoside 5'-diphosphate. Involved in mRNA degradation. Catalyzes the phosphorolysis of single-stranded polyribonucleotides processively in the 3'- to 5'-direction. This is Polyribonucleotide nucleotidyltransferase from Lactococcus lactis subsp. cremoris (strain MG1363).